A 166-amino-acid polypeptide reads, in one-letter code: MRLILLSGLLLLGTFLANGDEKDSEIQLLNSMIEAVMILQRDFSNLRYALMTVHNARSFGSGSERVYVSNKEVSKFEGLEEICSQAGGHIPSPQLENQNKAFADVLERHNKAAYLVVGDSANFTNWAAGHPNEADGTCVKADTHGSWHSASCDDNLLVVCEFYFIL.

Positions 1-19 are cleaved as a signal peptide; that stretch reads MRLILLSGLLLLGTFLANG. Residues 46-161 form the C-type lectin domain; it reads LRYALMTVHN…CDDNLLVVCE (116 aa). 2 disulfide bridges follow: C83-C160 and C138-C152. A glycan (N-linked (GlcNAc...) asparagine) is linked at N122.

Belongs to the alpha-type phospholipase A2 inhibitor family. Homomer composed of 20-25-kDa subunits that form oligomers of 180 kDa. N-glycosylated. The glycosidic chain may contain superficial sialic acid residues. Expressed by the liver.

The protein resides in the secreted. Its function is as follows. Selectively inhibits the toxic properties of myotoxin-II from the same venom (AC P81165). Does not inhibit PLA2, anti-coagulant and lethal activities of the basic myotoxin I from the same venom (AC P0DQP6), nor the different crotoxin forms (heterodimer or subunit B alone). Does not block the enzymatic activity of crude acidic PLA2 fractions from the same venom. The chain is Phospholipase A2 inhibitor CgMIP-II from Cerrophidion godmani (Porthidium godmani).